Reading from the N-terminus, the 120-residue chain is Small ribosomal subunit protein uS13 (120 aa).

Residues Pro96–Lys120 are disordered.

This sequence belongs to the universal ribosomal protein uS13 family. As to quaternary structure, part of the 30S ribosomal subunit. Forms a loose heterodimer with protein S19. Forms two bridges to the 50S subunit in the 70S ribosome.

In terms of biological role, located at the top of the head of the 30S subunit, it contacts several helices of the 16S rRNA. In the 70S ribosome it contacts the 23S rRNA (bridge B1a) and protein L5 of the 50S subunit (bridge B1b), connecting the 2 subunits; these bridges are implicated in subunit movement. Contacts the tRNAs in the A and P-sites. This chain is Small ribosomal subunit protein uS13, found in Dechloromonas aromatica (strain RCB).